The chain runs to 149 residues: MADQLSNEQISEFKEAFSLFDKDGDGTITTKELGTVMRSLGQNPTEAELQDMINEVDQDGSGTIDFPEFLTLMARKMQDSDSEEEIKEAFRVFDKDGNGFISAAELRHIMTNLGEKLTDEEVDEMIREADVDGDGQINYEEFVKMMMSK.

EF-hand domains lie at 8-43 (EQISEFKEAFSLFDKDGDGTITTKELGTVMRSLGQN), 44-79 (PTEAELQDMINEVDQDGSGTIDFPEFLTLMARKMQD), 81-116 (DSEEEIKEAFRVFDKDGNGFISAAELRHIMTNLGEK), and 117-149 (LTDEEVDEMIREADVDGDGQINYEEFVKMMMSK). Residues Asp21, Asp23, Asp25, Thr27, Glu32, Asp57, Asp59, Ser61, Thr63, Glu68, Asp94, Asp96, Asn98, and Glu105 each coordinate Ca(2+). Lys116 bears the N6,N6,N6-trimethyllysine mark. Residues Asp130, Asp132, Asp134, Gln136, and Glu141 each coordinate Ca(2+).

Belongs to the calmodulin family.

Its function is as follows. Calmodulin mediates the control of a large number of enzymes, ion channels and other proteins by Ca(2+). Among the enzymes to be stimulated by the calmodulin-Ca(2+) complex are a number of protein kinases and phosphatases. The chain is Calmodulin from Trypanosoma brucei brucei.